The sequence spans 338 residues: Citramalyl-CoA lyase, mitochondrial (338 aa).

A mitochondrion-targeting transit peptide spans Met1 to Lys20. Residues Tyr48, Lys55, and Lys59 each contribute to the substrate site. Lys55, Lys59, and Lys64 each carry N6-acetyllysine. Lys80 and Lys90 each carry N6-acetyllysine; alternate. Residues Lys80 and Lys90 each carry the N6-succinyllysine; alternate modification. Residue Arg105 coordinates substrate. Mg(2+) contacts are provided by Glu169 and Asp204. Ile270–His271 lines the substrate pocket. Lys307 carries the N6-succinyllysine modification. Asp318 is a catalytic residue.

The protein belongs to the HpcH/HpaI aldolase family. Citrate lyase beta subunit-like subfamily. Homotrimer. The cofactor is Mg(2+). As to expression, detected in brown fat, brain, liver, kidney, heart, skeletal muscle and ovary (at protein level).

It is found in the mitochondrion. The catalysed reaction is glyoxylate + acetyl-CoA + H2O = (S)-malate + CoA + H(+). It carries out the reaction propanoyl-CoA + glyoxylate + H2O = 3-methylmalate + CoA + H(+). It catalyses the reaction (3S)-citramalyl-CoA = pyruvate + acetyl-CoA. The enzyme catalyses (S)-malyl-CoA + H2O = (S)-malate + CoA + H(+). Mitochondrial citramalyl-CoA lyase indirectly involved in the vitamin B12 metabolism. Converts citramalyl-CoA into acetyl-CoA and pyruvate in the C5-dicarboxylate catabolism pathway. The C5-dicarboxylate catabolism pathway is required to detoxify itaconate, a vitamin B12-poisoning metabolite. Also acts as a malate synthase in vitro, converting glyoxylate and acetyl-CoA to malate. Also displays malyl-CoA thioesterase activity. Also acts as a beta-methylmalate synthase in vitro, by mediating conversion of glyoxylate and propionyl-CoA to beta-methylmalate. Also has very weak citramalate synthase activity in vitro. This is Citramalyl-CoA lyase, mitochondrial from Mus musculus (Mouse).